The following is a 385-amino-acid chain: MKFPSLLSLGVAASTTIVAAVPDQKPIGDIIEDVHLGKFLIELGPGDTRWVTEEEKWGLRRDGRRFFDITAEAGQGVFPKTFAQTTVTFPTELQNVAHVKKLASSLSKNRLQTFLTKFTSFYTRYYKSESGRQSAIWLFEQIEKTIQESSATEARVEKFEHPWGQFSIIATIPGQTNKTVVVGAHQDSINLLMPSILPAPGADDDGSGTATILEALRVLLKSEAVTQGKAPNTVEFHWYSAEEAGLLGSQAVFAQYKQDNRDVKSMLQQDMTGYSKGTTNAGHADSVGIITDFVDEGLTNFIKKVVTGYCGISYVLTKCGYACSDHASASRYGYPSAFVIESKFEYSSKLIHSTRDEVSSLDFDHMLQHAKMTLGLVYELAFADL.

Residues 1-20 form the signal peptide; sequence MKFPSLLSLGVAASTTIVAA. Positions 21–87 are excised as a propeptide; it reads VPDQKPIGDI…FPKTFAQTTV (67 aa). N-linked (GlcNAc...) asparagine glycosylation is present at asparagine 177. Zn(2+) is bound by residues histidine 185, aspartate 204, glutamate 243, and aspartate 270. Cysteine 319 and cysteine 323 form a disulfide bridge. Position 352 (histidine 352) interacts with Zn(2+).

Belongs to the peptidase M28 family. M28E subfamily. As to quaternary structure, monomer. The cofactor is Zn(2+).

It is found in the secreted. Functionally, extracellular aminopeptidase that allows assimilation of proteinaceous substrates. The sequence is that of Leucine aminopeptidase 1 (LAP1) from Ajellomyces capsulatus (strain G186AR / H82 / ATCC MYA-2454 / RMSCC 2432) (Darling's disease fungus).